The primary structure comprises 1311 residues: Transcriptional regulator ATRX homolog (1311 aa).

The interval 1–384 is disordered; the sequence is MGKKNPNARH…KQKNKRKHIR (384 aa). Basic and acidic residues predominate over residues 28–40; that stretch reads SRRESATESKSAS. Residues 61–83 show a composition bias toward low complexity; sequence KASGKATVSSSSDSDQAVANSSA. Residues 114-125 are compositionally biased toward polar residues; the sequence is RGSQQKNVTIND. 2 positions are modified to phosphoserine: Ser-126 and Ser-127. Residues 155–166 are compositionally biased toward acidic residues; sequence SDSEEVDEEEES. Positions 181–202 are enriched in basic and acidic residues; that stretch reads KPEKNSSKASKESIEKRQKAQK. The segment covering 219 to 237 has biased composition (low complexity); it reads RRGSLSSERSSRASSSRAE. The segment covering 241-265 has biased composition (basic residues); the sequence is RPKRCVVRLKRVSLPKTKPAQKPKK. Residues Ser-267, Ser-268, and Ser-270 each carry the phosphoserine modification. Over residues 290–306 the composition is skewed to acidic residues; that stretch reads EADSDYEAPAAEEEEEE. 4 positions are modified to phosphoserine: Ser-336, Ser-338, Ser-342, and Ser-343. Basic and acidic residues predominate over residues 336–351; that stretch reads SESDKGSSDFEPEEKQ. Residues 352-361 show a composition bias toward basic residues; the sequence is KKKGRKRIKK. The region spanning 476-664 is the Helicase ATP-binding domain; the sequence is ESQEKPGSGC…YCMIQFVKPN (189 aa). 489–496 is a binding site for ATP; that stretch reads HCMGLGKT. A DEGH box motif is present at residues 615–618; it reads DEGH. The tract at residues 837–878 is disordered; sequence ASSGKVKKRKTRNGNAGGGDSDSDLEMLGGLGGGSSVQKDDP. A phosphoserine mark is found at Ser-857 and Ser-859. The Helicase C-terminal domain occupies 905–1085; sequence RLLQQCEAIG…SRHYNQTDLM (181 aa). A disordered region spans residues 1285 to 1311; sequence MAGGSVAHGPPAAPAPGFEPDKVYEID.

This sequence belongs to the SNF2/RAD54 helicase family.

It is found in the nucleus. Its subcellular location is the chromosome. It carries out the reaction ATP + H2O = ADP + phosphate + H(+). Its function is as follows. Global transcriptional regulator. Modifies gene expression by affecting chromatin. This chain is Transcriptional regulator ATRX homolog (XNP), found in Drosophila melanogaster (Fruit fly).